The following is a 504-amino-acid chain: Cytochrome P450 2D1 (504 aa).

Cys-446 contacts heme.

Belongs to the cytochrome P450 family. Heme serves as cofactor.

It is found in the endoplasmic reticulum membrane. It localises to the microsome membrane. The catalysed reaction is an organic molecule + reduced [NADPH--hemoprotein reductase] + O2 = an alcohol + oxidized [NADPH--hemoprotein reductase] + H2O + H(+). Its function is as follows. Cytochromes P450 are a group of heme-thiolate monooxygenases. In liver microsomes, this enzyme is involved in an NADPH-dependent electron transport pathway. It oxidizes a variety of structurally unrelated compounds, including steroids, fatty acids, and xenobiotics. This is Cytochrome P450 2D1 (Cyp2d1) from Rattus norvegicus (Rat).